We begin with the raw amino-acid sequence, 169 residues long: UPF0303 protein Oant_1766 (169 aa).

Belongs to the UPF0303 family.

The sequence is that of UPF0303 protein Oant_1766 from Brucella anthropi (strain ATCC 49188 / DSM 6882 / CCUG 24695 / JCM 21032 / LMG 3331 / NBRC 15819 / NCTC 12168 / Alc 37) (Ochrobactrum anthropi).